Consider the following 544-residue polypeptide: Chaperonin GroEL (544 aa).

Residues 29-32 (TLGP), 86-90 (DGTTT), glycine 413, 478-480 (NAA), and aspartate 494 each bind ATP.

Belongs to the chaperonin (HSP60) family. As to quaternary structure, forms a cylinder of 14 subunits composed of two heptameric rings stacked back-to-back. Interacts with the co-chaperonin GroES.

Its subcellular location is the cytoplasm. The enzyme catalyses ATP + H2O + a folded polypeptide = ADP + phosphate + an unfolded polypeptide.. Together with its co-chaperonin GroES, plays an essential role in assisting protein folding. The GroEL-GroES system forms a nano-cage that allows encapsulation of the non-native substrate proteins and provides a physical environment optimized to promote and accelerate protein folding. The sequence is that of Chaperonin GroEL from Lysinibacillus sphaericus (strain C3-41).